A 325-amino-acid polypeptide reads, in one-letter code: Transcription initiation factor IIB 2 (325 aa).

The span at 1–13 (MSDSTIRTYSSDQ) shows a compositional bias: polar residues. The interval 1 to 29 (MSDSTIRTYSSDQRQTDNDETVSTPDEDV) is disordered. The TFIIB-type zinc finger occupies 28–58 (DVLTCPECGGQVIDDEEHGESVCVDCGLVVE). The Zn(2+) site is built by C32, C35, C50, and C53. Residues 73 to 93 (STEKDEKSRVGAPTTNMMHDK) form a disordered region. 2 consecutive repeat copies span residues 144–227 (GEIE…VREL) and 238–319 (QYVP…ELLE).

It belongs to the TFIIB family.

Stabilizes TBP binding to an archaeal box-A promoter. Also responsible for recruiting RNA polymerase II to the pre-initiation complex (DNA-TBP-TFIIB). In Halobacterium salinarum (strain ATCC 700922 / JCM 11081 / NRC-1) (Halobacterium halobium), this protein is Transcription initiation factor IIB 2.